The following is a 65-amino-acid chain: Conotoxin Cal16.1 (65 aa).

The N-terminal stretch at 1 to 19 (MRCLSIFVLLVLLVSFAVA) is a signal peptide. Positions 20–48 (ELDVEGEIVKQLLTRGTLKDADFWKRLEM) are excised as a propeptide. Pyrrolidone carboxylic acid is present on Q49. Intrachain disulfides connect C51-C60 and C53-C61. A Glutamic acid 1-amide modification is found at E63.

In terms of tissue distribution, expressed by the venom duct.

It is found in the secreted. In terms of biological role, probable neurotoxin with unknown target. Possibly targets ion channels. The protein is Conotoxin Cal16.1 of Californiconus californicus (California cone).